A 205-amino-acid chain; its full sequence is GTP cyclohydrolase-2 (205 aa).

49-53 contributes to the GTP binding site; the sequence is RVHSE. Zn(2+) contacts are provided by Cys-54, Cys-65, and Cys-67. GTP-binding positions include Gln-70, 92 to 94, and Thr-114; that span reads EGR. Asp-126 acts as the Proton acceptor in catalysis. The active-site Nucleophile is Arg-128. GTP-binding residues include Thr-149 and Lys-154.

This sequence belongs to the GTP cyclohydrolase II family. Requires Zn(2+) as cofactor.

It carries out the reaction GTP + 4 H2O = 2,5-diamino-6-hydroxy-4-(5-phosphoribosylamino)-pyrimidine + formate + 2 phosphate + 3 H(+). It participates in cofactor biosynthesis; riboflavin biosynthesis; 5-amino-6-(D-ribitylamino)uracil from GTP: step 1/4. Its function is as follows. Catalyzes the conversion of GTP to 2,5-diamino-6-ribosylamino-4(3H)-pyrimidinone 5'-phosphate (DARP), formate and pyrophosphate. In Pseudomonas fluorescens (strain SBW25), this protein is GTP cyclohydrolase-2.